The primary structure comprises 767 residues: MQSPAATAEGLSGPLFGAYTFPTFKFQPRHDSMDWRRISTLDVDRVARELDVATLQENIAGITFCNLDREVCSRCGQPVDPALLKVLRLAQLIIEYLLHCQDCLSASVAQLEARLQTSLGQQQRGQQELGRQADELKGVREESRRRRKMISTLQQLLMQTGTHSYHTCHLCDKTFMNATFLRGHIQRRHAGVAEGGKQKKQEQPVEEVLEELRAKLKWTQGELEAQREAERQRQLQEAELIHQREIEAKKEFDKWKEQEWTKLYGEIDKLKKLFWDEFKNVAKQNSTLEEKLRALQSHSVMESKLGSLRDEESEEWLRQARELQALREKTEIQKTEWKRKVKELHEEHMAEKKELQEENQRLQASLSQDQKKAAAQSQCQISTLRAQLQEQARIIASQEEMIQSLSLRKVEGIHKVPKAVDTEEDSPEEEMEDSQDEQHKVLAALRRNPTLLKHFRPILEDTLEEKLESMGIRKDAKGISIQTLRHLESLLRVQREQKARKFSEFLSLRGKLVKEVTSRAKERQENGAVVSQPDGQPSVKSQQSTLVTREAQPKTRTLQVALPSTPAEPPPPTRQSHGSHGSSLTQVSAPAPRPGLHGPSSTPPSSGPGMSTPPFSSEEDSEGDRVQRVSLQPPKVPSRMVPRPKDDWDWSDTETSEENAQPPGQGSGTLVQSMVKNLEKQLEAPAKKPAGGVSLFFMPNAGPQRAATPGRKPQLSEDESDLEISSLEDLPLDLDQREKPKPLSRSKLPEKFGTGPQSSGQPRVPAW.

Positions 122–144 (QQRGQQELGRQADELKGVREESR) are disordered. Residues 131–144 (RQADELKGVREESR) are compositionally biased toward basic and acidic residues. The C2H2-type zinc-finger motif lies at 166–189 (HTCHLCDKTFMNATFLRGHIQRRH). Residues 205–406 (VEEVLEELRA…SQEEMIQSLS (202 aa)) are a coiled coil. Ser426 is subject to Phosphoserine. Residues 518–767 (SRAKERQENG…SSGQPRVPAW (250 aa)) form a disordered region. Composition is skewed to polar residues over residues 533 to 547 (PDGQ…STLV) and 574 to 588 (RQSH…TQVS). Positions 607-616 (GPGMSTPPFS) are enriched in low complexity. The segment covering 658 to 675 (ENAQPPGQGSGTLVQSMV) has biased composition (polar residues). Positions 677–686 (NLEKQLEAPA) are enriched in basic and acidic residues.

Belongs to the DZIP C2H2-type zinc-finger protein family. Interacts with SEPTIN2.

Its subcellular location is the cytoplasm. It is found in the cytoskeleton. It localises to the cilium basal body. The protein localises to the microtubule organizing center. The protein resides in the centrosome. Its subcellular location is the centriole. In terms of biological role, involved in primary cilium formation. Probably acts as a transition zone protein required for localization of PKD1/PC1 and PKD2/PC2 to the ciliary membrane. In Homo sapiens (Human), this protein is Cilium assembly protein DZIP1L.